A 157-amino-acid polypeptide reads, in one-letter code: 2-C-methyl-D-erythritol 2,4-cyclodiphosphate synthase (157 aa).

The a divalent metal cation site is built by Asp-8 and His-10. Residues 8-10 (DVH) and 34-35 (HS) contribute to the 4-CDP-2-C-methyl-D-erythritol 2-phosphate site. His-42 is a binding site for a divalent metal cation. 4-CDP-2-C-methyl-D-erythritol 2-phosphate contacts are provided by residues 56 to 58 (DIG), 61 to 65 (FPDTD), 100 to 106 (AQAPKML), 132 to 135 (TTTE), Phe-139, and Arg-142.

This sequence belongs to the IspF family. In terms of assembly, homotrimer. Requires a divalent metal cation as cofactor.

It catalyses the reaction 4-CDP-2-C-methyl-D-erythritol 2-phosphate = 2-C-methyl-D-erythritol 2,4-cyclic diphosphate + CMP. The protein operates within isoprenoid biosynthesis; isopentenyl diphosphate biosynthesis via DXP pathway; isopentenyl diphosphate from 1-deoxy-D-xylulose 5-phosphate: step 4/6. Functionally, involved in the biosynthesis of isopentenyl diphosphate (IPP) and dimethylallyl diphosphate (DMAPP), two major building blocks of isoprenoid compounds. Catalyzes the conversion of 4-diphosphocytidyl-2-C-methyl-D-erythritol 2-phosphate (CDP-ME2P) to 2-C-methyl-D-erythritol 2,4-cyclodiphosphate (ME-CPP) with a corresponding release of cytidine 5-monophosphate (CMP). The polypeptide is 2-C-methyl-D-erythritol 2,4-cyclodiphosphate synthase (Erwinia tasmaniensis (strain DSM 17950 / CFBP 7177 / CIP 109463 / NCPPB 4357 / Et1/99)).